The primary structure comprises 298 residues: Protoheme IX farnesyltransferase (298 aa).

9 helical membrane passes run 16 to 36 (VVALIVFTALVGMFLAIPDMP), 45 to 65 (ALGFLGIWLAASAAAAINQLL), 93 to 113 (VFAGALIVISMTILVVWVNVI), 114 to 134 (TAVLTFASLIGYAVIYTVYLK), 141 to 161 (IVIGGLAGATPPMLGWAAVTG), 172 to 192 (SLLVLIIFIWTPPHFWALAIF), 223 to 243 (VLLAIVTLAPVAVGMSGVFYL), 244 to 264 (GGAIVLNAVFLWYAWRMLNPP), and 277 to 297 (IVYLMALFAFLMVDHLLLPWV).

The protein belongs to the UbiA prenyltransferase family. Protoheme IX farnesyltransferase subfamily.

The protein localises to the cell inner membrane. The catalysed reaction is heme b + (2E,6E)-farnesyl diphosphate + H2O = Fe(II)-heme o + diphosphate. It participates in porphyrin-containing compound metabolism; heme O biosynthesis; heme O from protoheme: step 1/1. Its function is as follows. Converts heme B (protoheme IX) to heme O by substitution of the vinyl group on carbon 2 of heme B porphyrin ring with a hydroxyethyl farnesyl side group. The sequence is that of Protoheme IX farnesyltransferase from Xanthomonas euvesicatoria pv. vesicatoria (strain 85-10) (Xanthomonas campestris pv. vesicatoria).